The chain runs to 174 residues: MIDSDGFRANVGIIICNRYGQVMWARRFGQHSWQFPQGGVDDGESAEEAMYRELYEEVGLRPEHVTILTSTRSWLRYRLPKRLVRQDSKPVCIGQKQKWFLLQLKSQDSAINLSSSGHPEFDDWRWVSYWYPVRQVVSFKRDVYRKVMKEFAVTALSFQTQEIPRKRVRQRTTG.

In terms of domain architecture, Nudix hydrolase spans 6 to 149 (GFRANVGIII…KRDVYRKVMK (144 aa)). The short motif at 38 to 59 (GGVDDGESAEEAMYRELYEEVG) is the Nudix box element.

Belongs to the Nudix hydrolase family. RppH subfamily. A divalent metal cation is required as a cofactor.

Functionally, accelerates the degradation of transcripts by removing pyrophosphate from the 5'-end of triphosphorylated RNA, leading to a more labile monophosphorylated state that can stimulate subsequent ribonuclease cleavage. This chain is RNA pyrophosphohydrolase, found in Shewanella sp. (strain ANA-3).